The sequence spans 431 residues: IMP-specific 5'-nucleotidase 1 (431 aa).

Lysine 117 is an ATP binding site. The Nucleophile role is filled by aspartate 157. IMP contacts are provided by aspartate 157, aspartate 159, aspartate 165, threonine 193, aspartate 349, and lysine 357. Mg(2+)-binding residues include aspartate 157 and aspartate 159. Aspartate 159 functions as the Proton donor in the catalytic mechanism. Residue aspartate 388 coordinates Mg(2+).

Belongs to the ISN1 family. As to quaternary structure, homotetramer. The cofactor is Mg(2+).

It catalyses the reaction IMP + H2O = inosine + phosphate. Its activity is regulated as follows. Allosterically activated by ATP. ATP binding is a prerequisite to magnesium and substrate binding. ATP binds to 2 of the subunits in the homotetramer inducing a closure of these 2 subunits and the release of the C-terminal loop, thereby activating the enzyme. IMP-specific 5'-nucleotidase involved in IMP (inositol monophosphate) degradation. The polypeptide is IMP-specific 5'-nucleotidase 1 (isn-1) (Neurospora crassa (strain ATCC 24698 / 74-OR23-1A / CBS 708.71 / DSM 1257 / FGSC 987)).